Reading from the N-terminus, the 380-residue chain is 3-dehydroquinate synthase (380 aa).

The protein belongs to the archaeal-type DHQ synthase family.

The catalysed reaction is 2-amino-2,3,7-trideoxy-D-lyxo-hept-6-ulosonate + NAD(+) + H2O = 3-dehydroquinate + NH4(+) + NADH + H(+). In terms of biological role, catalyzes the oxidative deamination and cyclization of 2-amino-3,7-dideoxy-D-threo-hept-6-ulosonic acid (ADH) to yield 3-dehydroquinate (DHQ), which is fed into the canonical shikimic pathway of aromatic amino acid biosynthesis. This is 3-dehydroquinate synthase from Methanosarcina mazei (strain ATCC BAA-159 / DSM 3647 / Goe1 / Go1 / JCM 11833 / OCM 88) (Methanosarcina frisia).